The chain runs to 177 residues: RNA polymerase sigma-E factor (177 aa).

Positions Asp-34 to Trp-47 match the Polymerase core binding motif. A DNA-binding region (H-T-H motif) is located at residues Thr-128–His-147.

The protein belongs to the sigma-70 factor family. ECF subfamily.

The protein localises to the cytoplasm. In terms of biological role, sigma factors are initiation factors that promote the attachment of RNA polymerase to specific initiation sites and are then released. This sigma factor is required for normal cell wall integrity; it is recruited by RNA polymerase to transcribe genes with cell wall-related functions. It is also involved in the transcription of the dagA gene coding for an extracellular agar-degrading enzyme. In Streptomyces coelicolor (strain ATCC BAA-471 / A3(2) / M145), this protein is RNA polymerase sigma-E factor (sigE).